A 732-amino-acid polypeptide reads, in one-letter code: Coagulation factor XIII A chain (732 aa).

The interval 1–27 is disordered; sequence MSETSRTAFGGRRAVPPNNSNAAEDDL. Ser-2 bears the N-acetylserine mark. Residues 2–38 constitute a propeptide, activation peptide; the sequence is SETSRTAFGGRRAVPPNNSNAAEDDLPTVELQGVVPR. Catalysis depends on residues Cys-315, His-374, and Asp-397. Residues Asn-437, Asp-439, Glu-486, and Glu-491 each coordinate Ca(2+). A glycan (N-linked (GlcNAc...) asparagine) is linked at Asn-614.

This sequence belongs to the transglutaminase superfamily. Transglutaminase family. In terms of assembly, tetramer of two A chains (F13A1) and two B (F13B) chains. The cofactor is Ca(2+). Post-translationally, the activation peptide is released by thrombin.

The protein resides in the cytoplasm. The protein localises to the secreted. It catalyses the reaction L-glutaminyl-[protein] + L-lysyl-[protein] = [protein]-L-lysyl-N(6)-5-L-glutamyl-[protein] + NH4(+). Functionally, factor XIII is activated by thrombin and calcium ion to a transglutaminase that catalyzes the formation of gamma-glutamyl-epsilon-lysine cross-links between fibrin chains, thus stabilizing the fibrin clot. Also cross-link alpha-2-plasmin inhibitor, or fibronectin, to the alpha chains of fibrin. The polypeptide is Coagulation factor XIII A chain (F13A1) (Homo sapiens (Human)).